Here is a 143-residue protein sequence, read N- to C-terminus: Large ribosomal subunit protein uL11 (143 aa).

The protein belongs to the universal ribosomal protein uL11 family. In terms of assembly, part of the ribosomal stalk of the 50S ribosomal subunit. Interacts with L10 and the large rRNA to form the base of the stalk. L10 forms an elongated spine to which L12 dimers bind in a sequential fashion forming a multimeric L10(L12)X complex. One or more lysine residues are methylated.

In terms of biological role, forms part of the ribosomal stalk which helps the ribosome interact with GTP-bound translation factors. The protein is Large ribosomal subunit protein uL11 of Paraburkholderia xenovorans (strain LB400).